Consider the following 354-residue polypeptide: Anthranilate phosphoribosyltransferase (354 aa).

Residues glycine 94, 97–98, threonine 102, 104–107, 122–130, and serine 134 contribute to the 5-phospho-alpha-D-ribose 1-diphosphate site; these read GD, NIST, and KHGNRAASS. Glycine 94 serves as a coordination point for anthranilate. Residue serine 106 participates in Mg(2+) binding. Asparagine 125 contacts anthranilate. Position 180 (arginine 180) interacts with anthranilate. Residues aspartate 238 and glutamate 239 each contribute to the Mg(2+) site.

This sequence belongs to the anthranilate phosphoribosyltransferase family. Homodimer. Mg(2+) serves as cofactor.

It catalyses the reaction N-(5-phospho-beta-D-ribosyl)anthranilate + diphosphate = 5-phospho-alpha-D-ribose 1-diphosphate + anthranilate. It participates in amino-acid biosynthesis; L-tryptophan biosynthesis; L-tryptophan from chorismate: step 2/5. Its function is as follows. Catalyzes the transfer of the phosphoribosyl group of 5-phosphorylribose-1-pyrophosphate (PRPP) to anthranilate to yield N-(5'-phosphoribosyl)-anthranilate (PRA). This is Anthranilate phosphoribosyltransferase from Streptomyces griseus subsp. griseus (strain JCM 4626 / CBS 651.72 / NBRC 13350 / KCC S-0626 / ISP 5235).